The sequence spans 919 residues: TRPM8 channel-associated factor 2 (919 aa).

In terms of domain architecture, Peptidase M60 spans 543-842 (DVWMSTGLYL…TYLQLQEVFG (300 aa)).

It belongs to the TCAF family. As to quaternary structure, interacts with TRPM8 (via N-terminus and C-terminus domains); the interaction inhibits TRPM8 channel activity. Interacts with TRPV6.

It localises to the cell membrane. Negatively regulates the plasma membrane cation channel TRPM8 activity. Involved in the recruitment of TRPM8 to the cell surface. Promotes prostate cancer cell migration stimulation in a TRPM8-dependent manner. The polypeptide is TRPM8 channel-associated factor 2 (Mus musculus (Mouse)).